A 285-amino-acid polypeptide reads, in one-letter code: Ribosomal RNA small subunit methyltransferase A (285 aa).

S-adenosyl-L-methionine contacts are provided by N30, L32, G57, E78, D101, and N121.

Belongs to the class I-like SAM-binding methyltransferase superfamily. rRNA adenine N(6)-methyltransferase family. RsmA subfamily.

The protein localises to the cytoplasm. It carries out the reaction adenosine(1518)/adenosine(1519) in 16S rRNA + 4 S-adenosyl-L-methionine = N(6)-dimethyladenosine(1518)/N(6)-dimethyladenosine(1519) in 16S rRNA + 4 S-adenosyl-L-homocysteine + 4 H(+). In terms of biological role, specifically dimethylates two adjacent adenosines (A1518 and A1519) in the loop of a conserved hairpin near the 3'-end of 16S rRNA in the 30S particle. May play a critical role in biogenesis of 30S subunits. The chain is Ribosomal RNA small subunit methyltransferase A from Treponema pallidum (strain Nichols).